Consider the following 60-residue polypeptide: Myrmicitoxin(1)-Pr4a (60 aa).

The N-terminal stretch at 1 to 23 (MKAIIFLFAVLTVVAIIIPIISG) is a signal peptide. The propeptide occupies 24–33 (EPNAGPHAAS). At Q59 the chain carries Glutamine amide.

The protein belongs to the formicidae venom clade 2 family. In terms of tissue distribution, expressed by the venom gland.

The protein resides in the secreted. Functionally, toxin that causes a rapid and irreversible paralysis when intrathoracically injected into insects (blowflies). Does not cause spontaneous nocifensive behaviors by intraplantar injection in mice. This is Myrmicitoxin(1)-Pr4a from Pogonomyrmex rugosus (Desert harvester ant).